Consider the following 187-residue polypeptide: Large ribosomal subunit protein uL5 (187 aa).

It belongs to the universal ribosomal protein uL5 family. In terms of assembly, part of the 50S ribosomal subunit; part of the 5S rRNA/L5/L18/L25 subcomplex. Contacts the 5S rRNA and the P site tRNA. Forms a bridge to the 30S subunit in the 70S ribosome.

Functionally, this is one of the proteins that bind and probably mediate the attachment of the 5S RNA into the large ribosomal subunit, where it forms part of the central protuberance. In the 70S ribosome it contacts protein S13 of the 30S subunit (bridge B1b), connecting the 2 subunits; this bridge is implicated in subunit movement. Contacts the P site tRNA; the 5S rRNA and some of its associated proteins might help stabilize positioning of ribosome-bound tRNAs. This chain is Large ribosomal subunit protein uL5, found in Mycobacterium avium (strain 104).